The sequence spans 266 residues: MTKIAVCGAAGRMGQRIIVAAREAGCTISGALERPGHEMVGQDAGLIAGCGALGVAISDDLNAVVEGCDVLIDFTTPKVSLKNLEVCALKKKSIVIGSTGFTPEERALAVELAREIPAVLAPNMSVGVNVCFKILKDVAKTLGDDFDVEIVELHHNKKKDAPSGTAVRMGEVVAEALGRDYNKVATYHREGICGERTKEEIGMQTVRGGDIVGEHTVYFIGMGERIEISHRAMTRDMFSRGSVRAAQWVVGKAPGLYDMQDVLGLK.

NAD(+)-binding positions include 8 to 13 (GAAGRM) and glutamate 33. Arginine 34 lines the NADP(+) pocket. Residues 97 to 99 (GST) and 121 to 124 (APNM) contribute to the NAD(+) site. Histidine 154 serves as the catalytic Proton donor/acceptor. A (S)-2,3,4,5-tetrahydrodipicolinate-binding site is contributed by histidine 155. Catalysis depends on lysine 158, which acts as the Proton donor. 164–165 (GT) provides a ligand contact to (S)-2,3,4,5-tetrahydrodipicolinate.

It belongs to the DapB family.

The protein resides in the cytoplasm. The catalysed reaction is (S)-2,3,4,5-tetrahydrodipicolinate + NAD(+) + H2O = (2S,4S)-4-hydroxy-2,3,4,5-tetrahydrodipicolinate + NADH + H(+). It carries out the reaction (S)-2,3,4,5-tetrahydrodipicolinate + NADP(+) + H2O = (2S,4S)-4-hydroxy-2,3,4,5-tetrahydrodipicolinate + NADPH + H(+). It functions in the pathway amino-acid biosynthesis; L-lysine biosynthesis via DAP pathway; (S)-tetrahydrodipicolinate from L-aspartate: step 4/4. Catalyzes the conversion of 4-hydroxy-tetrahydrodipicolinate (HTPA) to tetrahydrodipicolinate. This is 4-hydroxy-tetrahydrodipicolinate reductase from Geobacter sulfurreducens (strain ATCC 51573 / DSM 12127 / PCA).